The following is a 393-amino-acid chain: E3 ubiquitin-protein transferase RMND5B (393 aa).

The residue at position 1 (Met1) is an N-acetylmethionine. The LisH domain occupies 116-148; sequence QQQILQMAIVEHLYQQGMLSVAEELCQESTLNV. The 58-residue stretch at 155-212 folds into the CTLH domain; sequence PFLELNRILEALHEQDLGPALEWAVSHRQRLLELNSSLEFKLHRLHFIRLLAGGPAKQ. Residues 338 to 379 form an RING-Gid-type zinc finger; it reads CPILRQQTSDSNPPIKLICGHVISRDALNKLINGGKLKCPYC.

As to quaternary structure, identified in the CTLH complex that contains GID4, RANBP9 and/or RANBP10, MKLN1, MAEA, RMND5A (or alternatively its paralog RMND5B), GID8, ARMC8, WDR26 and YPEL5. Within this complex, MAEA, RMND5A (or alternatively its paralog RMND5B), GID8, WDR26, and RANBP9 and/or RANBP10 form the catalytic core, while GID4, MKLN1, ARMC8 and YPEL5 have ancillary roles.

Its subcellular location is the cytoplasm. The protein resides in the cytosol. The enzyme catalyses S-ubiquitinyl-[E2 ubiquitin-conjugating enzyme]-L-cysteine + [acceptor protein]-L-lysine = [E2 ubiquitin-conjugating enzyme]-L-cysteine + N(6)-ubiquitinyl-[acceptor protein]-L-lysine.. Core component of the CTLH E3 ubiquitin-protein ligase complex that selectively accepts ubiquitin from UBE2H and mediates ubiquitination and subsequent proteasomal degradation of the transcription factor HBP1. MAEA and RMND5A are both required for catalytic activity of the CTLH E3 ubiquitin-protein ligase complex. Catalytic activity of the complex is required for normal cell proliferation. The CTLH E3 ubiquitin-protein ligase complex is not required for the degradation of enzymes involved in gluconeogenesis, such as FBP1. The protein is E3 ubiquitin-protein transferase RMND5B (RMND5B) of Homo sapiens (Human).